The primary structure comprises 422 residues: Fasciclin-like arabinogalactan protein 10 (422 aa).

The first 25 residues, 1–25, serve as a signal peptide directing secretion; it reads MATSRAFTLFAFTLSLLTVASTVSG. FAS1 domains lie at 26 to 172 and 187 to 327; these read HNIT…NAPI and GVSN…DNVL. N-linked (GlcNAc...) asparagine glycosylation is found at asparagine 27, asparagine 128, asparagine 162, asparagine 190, and asparagine 244. A disordered region spans residues 336 to 397; it reads SSSPAPAPEP…PTSSENSNAK (62 aa). A compositionally biased stretch (pro residues) spans 340–374; the sequence is APAPEPVSAPTPTPAKSPSPVEAPSPTAASPPAPP. Polar residues predominate over residues 386-397; that stretch reads DSPTSSENSNAK. A lipid anchor (GPI-anchor amidated asparagine) is attached at asparagine 398. Residues 399-422 constitute a propeptide, removed in mature form; that stretch reads AAFHVNAPALFTALVTIAATSLLL.

Belongs to the fasciclin-like AGP family.

The protein localises to the cell membrane. Its function is as follows. May be a cell surface adhesion protein. The chain is Fasciclin-like arabinogalactan protein 10 (FLA10) from Arabidopsis thaliana (Mouse-ear cress).